The chain runs to 447 residues: UDP-N-acetylmuramate--L-alanine ligase (447 aa).

108–114 provides a ligand contact to ATP; it reads GSHGKTS.

Belongs to the MurCDEF family.

The protein localises to the cytoplasm. The catalysed reaction is UDP-N-acetyl-alpha-D-muramate + L-alanine + ATP = UDP-N-acetyl-alpha-D-muramoyl-L-alanine + ADP + phosphate + H(+). It functions in the pathway cell wall biogenesis; peptidoglycan biosynthesis. In terms of biological role, cell wall formation. The polypeptide is UDP-N-acetylmuramate--L-alanine ligase (Listeria monocytogenes serotype 4a (strain HCC23)).